The primary structure comprises 104 residues: L-rhamnose mutarotase (104 aa).

Position 18 (Tyr-18) interacts with substrate. The active-site Proton donor is the His-22. Residues Tyr-41 and 76–77 contribute to the substrate site; that span reads WW.

It belongs to the rhamnose mutarotase family. Homodimer.

The protein localises to the cytoplasm. The enzyme catalyses alpha-L-rhamnose = beta-L-rhamnose. It participates in carbohydrate metabolism; L-rhamnose metabolism. Involved in the anomeric conversion of L-rhamnose. This chain is L-rhamnose mutarotase, found in Acidiphilium cryptum (strain JF-5).